A 92-amino-acid polypeptide reads, in one-letter code: Small ribosomal subunit protein uS19c (92 aa).

This sequence belongs to the universal ribosomal protein uS19 family.

The protein localises to the plastid. Its subcellular location is the chloroplast. Its function is as follows. Protein S19 forms a complex with S13 that binds strongly to the 16S ribosomal RNA. The chain is Small ribosomal subunit protein uS19c (rps19) from Porphyra purpurea (Red seaweed).